The primary structure comprises 297 residues: Homoserine kinase (297 aa).

82–92 contributes to the ATP binding site; it reads PVSRGLGSSAA.

It belongs to the GHMP kinase family. Homoserine kinase subfamily.

The protein resides in the cytoplasm. The enzyme catalyses L-homoserine + ATP = O-phospho-L-homoserine + ADP + H(+). Its pathway is amino-acid biosynthesis; L-threonine biosynthesis; L-threonine from L-aspartate: step 4/5. Its function is as follows. Catalyzes the ATP-dependent phosphorylation of L-homoserine to L-homoserine phosphate. The sequence is that of Homoserine kinase from Clostridium botulinum (strain ATCC 19397 / Type A).